We begin with the raw amino-acid sequence, 106 residues long: MASITMMSSFLGGSTVAPAKVPSANRRGVVMVKAMHEGENNVVISKNEESKNSGRRELFFAMAAAAACSVAKTAMADEEPKRGTPEAKKKYSSVCVTNPTARICRY.

The N-terminal 76 residues, 1–76 (MASITMMSSF…ACSVAKTAMA (76 aa)), are a transit peptide targeting the chloroplast. Cys95 and Cys104 are joined by a disulfide.

Disulfide bond. As to expression, expressed in midvein, lamina and periphery of leaves (at protein level).

It is found in the plastid. The protein localises to the chloroplast thylakoid membrane. May be a component of the oxygen-evolving complex. The chain is Photosystem II 5 kDa protein, chloroplastic from Petunia hybrida (Petunia).